We begin with the raw amino-acid sequence, 943 residues long: Isoleucine--tRNA ligase (943 aa).

Residues 59-69 carry the 'HIGH' region motif; sequence PYANGRIHLGH. Residue glutamate 577 coordinates L-isoleucyl-5'-AMP. A 'KMSKS' region motif is present at residues 618-622; it reads KMSKS. Lysine 621 lines the ATP pocket. Cysteine 906, cysteine 909, cysteine 926, and cysteine 929 together coordinate Zn(2+).

Belongs to the class-I aminoacyl-tRNA synthetase family. IleS type 1 subfamily. Monomer. The cofactor is Zn(2+).

The protein resides in the cytoplasm. The catalysed reaction is tRNA(Ile) + L-isoleucine + ATP = L-isoleucyl-tRNA(Ile) + AMP + diphosphate. Catalyzes the attachment of isoleucine to tRNA(Ile). As IleRS can inadvertently accommodate and process structurally similar amino acids such as valine, to avoid such errors it has two additional distinct tRNA(Ile)-dependent editing activities. One activity is designated as 'pretransfer' editing and involves the hydrolysis of activated Val-AMP. The other activity is designated 'posttransfer' editing and involves deacylation of mischarged Val-tRNA(Ile). The protein is Isoleucine--tRNA ligase of Stenotrophomonas maltophilia (strain R551-3).